The sequence spans 198 residues: Holliday junction branch migration complex subunit RuvA (198 aa).

Positions 1–63 (MYDYIKGQLT…EDAHLLFGFH (63 aa)) are domain I. Residues 64-142 (TEDEKDVFLK…EAPQETGNTK (79 aa)) form a domain II region. Residues 143–147 (ARSNK) are flexible linker. Positions 148–198 (AGNTQLDEAIEALLALGYKAAELKKIRAFFEGTSETAEQYIKSALKLLMKG) are domain III.

The protein belongs to the RuvA family. In terms of assembly, homotetramer. Forms an RuvA(8)-RuvB(12)-Holliday junction (HJ) complex. HJ DNA is sandwiched between 2 RuvA tetramers; dsDNA enters through RuvA and exits via RuvB. An RuvB hexamer assembles on each DNA strand where it exits the tetramer. Each RuvB hexamer is contacted by two RuvA subunits (via domain III) on 2 adjacent RuvB subunits; this complex drives branch migration. In the full resolvosome a probable DNA-RuvA(4)-RuvB(12)-RuvC(2) complex forms which resolves the HJ.

The protein resides in the cytoplasm. In terms of biological role, the RuvA-RuvB-RuvC complex processes Holliday junction (HJ) DNA during genetic recombination and DNA repair, while the RuvA-RuvB complex plays an important role in the rescue of blocked DNA replication forks via replication fork reversal (RFR). RuvA specifically binds to HJ cruciform DNA, conferring on it an open structure. The RuvB hexamer acts as an ATP-dependent pump, pulling dsDNA into and through the RuvAB complex. HJ branch migration allows RuvC to scan DNA until it finds its consensus sequence, where it cleaves and resolves the cruciform DNA. This Streptococcus pyogenes serotype M28 (strain MGAS6180) protein is Holliday junction branch migration complex subunit RuvA.